An 859-amino-acid polypeptide reads, in one-letter code: DNA mismatch repair protein MutS (859 aa).

617–624 provides a ligand contact to ATP; sequence GPNMGGKS. The interval 799–821 is disordered; the sequence is ETTSLPHEQPRAKPGKPAVPQQS.

It belongs to the DNA mismatch repair MutS family.

Functionally, this protein is involved in the repair of mismatches in DNA. It is possible that it carries out the mismatch recognition step. This protein has a weak ATPase activity. The polypeptide is DNA mismatch repair protein MutS (Pseudomonas syringae pv. syringae (strain B728a)).